Here is a 432-residue protein sequence, read N- to C-terminus: uncharacterized protein (432 aa).

The protein to M.jannaschii MJ0977.

This is an uncharacterized protein from Methanocaldococcus jannaschii (strain ATCC 43067 / DSM 2661 / JAL-1 / JCM 10045 / NBRC 100440) (Methanococcus jannaschii).